The sequence spans 759 residues: 1,4-alpha-glucan branching enzyme GlgB (759 aa).

The active-site Nucleophile is D431. The active-site Proton donor is E484.

Belongs to the glycosyl hydrolase 13 family. GlgB subfamily. In terms of assembly, monomer.

The enzyme catalyses Transfers a segment of a (1-&gt;4)-alpha-D-glucan chain to a primary hydroxy group in a similar glucan chain.. It functions in the pathway glycan biosynthesis; glycogen biosynthesis. Functionally, catalyzes the formation of the alpha-1,6-glucosidic linkages in glycogen by scission of a 1,4-alpha-linked oligosaccharide from growing alpha-1,4-glucan chains and the subsequent attachment of the oligosaccharide to the alpha-1,6 position. The protein is 1,4-alpha-glucan branching enzyme GlgB of Prochlorococcus marinus (strain MIT 9211).